The sequence spans 280 residues: Probable inactive shikimate kinase like 1, chloroplastic (280 aa).

The transit peptide at 1–54 directs the protein to the chloroplast; the sequence is MEIFSASASLTLTGFVPRLLPLLSPQARTTLCKPLLSSSSTRLISCHSRIAPSR.

The protein belongs to the shikimate kinase family.

It localises to the plastid. It is found in the chloroplast. Functionally, required for chloroplast biogenesis. This Arabidopsis thaliana (Mouse-ear cress) protein is Probable inactive shikimate kinase like 1, chloroplastic (SKL1).